A 528-amino-acid chain; its full sequence is MNSVEIANELKELLNGGNINVQLSVPQLAEKATSRGEAMLTVDGAVRAETGKYTGRSPKDKYTVEEESTKDQIDWGKVNQPISSEVFDNLYVKVIKYLKERDELFVFKGFAGADKDSQLSIQVINEYAWHNLFAHQLFIRPTKEELASHVADFTVISAPNFKADPAVDGTASETFIIVSLEKKIILIGGTEYAGEMKKSIFGIMNYLLPQQGILSMHCSANVGEAGDVALFFGLSGTGKTTLSADPDRKLIGDDEHGWSDNGVFNIEGGCYAKTINLSAEKEPEIYNAIRFGSVLENVAVDPETRICDYDDGSLTENTRVAYPIQYIENIVDPSVAGHPKTIIFLTADAFGVLPPISKLTKEQAMYHFLSGFTSKLAGTERGVTEPEPVFSTCFGSPFLPLPATVYAEMLGQKIDEHGAQVYLVNTGWTGGEYGTGSRMKLSYTRTMVRAAIDGKLTNVETTQDAVFGLHIPTAVEGVPSQVLNPREAWADKAAYDAKAAELAGLFNENFKKFANVSEAITTLGGPLK.

3 residues coordinate substrate: Arg56, Tyr192, and Lys198. ATP-binding positions include Lys198, His217, and 233 to 241 (GLSGTGKTT). Mn(2+) is bound by residues Lys198 and His217. A Mn(2+)-binding site is contributed by Asp254. ATP contacts are provided by Glu282, Arg319, and Thr444. Arg319 lines the substrate pocket.

It belongs to the phosphoenolpyruvate carboxykinase (ATP) family. Mn(2+) serves as cofactor.

It is found in the cytoplasm. It carries out the reaction oxaloacetate + ATP = phosphoenolpyruvate + ADP + CO2. It functions in the pathway carbohydrate biosynthesis; gluconeogenesis. Its function is as follows. Involved in the gluconeogenesis. Catalyzes the conversion of oxaloacetate (OAA) to phosphoenolpyruvate (PEP) through direct phosphoryl transfer between the nucleoside triphosphate and OAA. This Lysinibacillus sphaericus (strain C3-41) protein is Phosphoenolpyruvate carboxykinase (ATP).